We begin with the raw amino-acid sequence, 481 residues long: UDP-N-acetylmuramoyl-L-alanyl-D-glutamate--L-lysine ligase (481 aa).

Ser-42 serves as a coordination point for UDP-N-acetyl-alpha-D-muramoyl-L-alanyl-D-glutamate. 118–124 (GTKGKTT) lines the ATP pocket. UDP-N-acetyl-alpha-D-muramoyl-L-alanyl-D-glutamate contacts are provided by residues 160-161 (TT), Ser-187, and Arg-195. Lys-229 is subject to N6-carboxylysine. An L-lysine recognition motif motif is present at residues 404–407 (DDPN).

The protein belongs to the MurCDEF family. MurE subfamily. Post-translationally, carboxylation is probably crucial for Mg(2+) binding and, consequently, for the gamma-phosphate positioning of ATP.

It is found in the cytoplasm. The catalysed reaction is UDP-N-acetyl-alpha-D-muramoyl-L-alanyl-D-glutamate + L-lysine + ATP = UDP-N-acetyl-alpha-D-muramoyl-L-alanyl-gamma-D-glutamyl-L-lysine + ADP + phosphate + H(+). The protein operates within cell wall biogenesis; peptidoglycan biosynthesis. In terms of biological role, catalyzes the addition of L-lysine to the nucleotide precursor UDP-N-acetylmuramoyl-L-alanyl-D-glutamate (UMAG) in the biosynthesis of bacterial cell-wall peptidoglycan. The chain is UDP-N-acetylmuramoyl-L-alanyl-D-glutamate--L-lysine ligase from Streptococcus pneumoniae (strain ATCC BAA-255 / R6).